The primary structure comprises 517 residues: Mitochondrial division protein fszA (517 aa).

GTP contacts are provided by residues 60 to 64, 147 to 149, glutamate 178, arginine 182, and aspartate 225; these read GGGCN and GTG. The interval 496–517 is disordered; that stretch reads FTNGNNNKPYNNNKNTPGSNYE. Over residues 497–517 the composition is skewed to low complexity; the sequence is TNGNNNKPYNNNKNTPGSNYE.

Belongs to the FtsZ family.

It is found in the mitochondrion matrix. In terms of biological role, probably involved in mitochondrion division process. When overexpressed, induces mitochondrial tubule formation. Binds to and hydrolyzes GTP. In Dictyostelium discoideum (Social amoeba), this protein is Mitochondrial division protein fszA (fszA).